The primary structure comprises 177 residues: Adenine phosphoribosyltransferase (177 aa).

It belongs to the purine/pyrimidine phosphoribosyltransferase family. As to quaternary structure, homodimer.

Its subcellular location is the cytoplasm. The enzyme catalyses AMP + diphosphate = 5-phospho-alpha-D-ribose 1-diphosphate + adenine. Its pathway is purine metabolism; AMP biosynthesis via salvage pathway; AMP from adenine: step 1/1. Catalyzes a salvage reaction resulting in the formation of AMP, that is energically less costly than de novo synthesis. The sequence is that of Adenine phosphoribosyltransferase from Chlorobaculum parvum (strain DSM 263 / NCIMB 8327) (Chlorobium vibrioforme subsp. thiosulfatophilum).